The chain runs to 942 residues: Homeobox protein 2 (942 aa).

Composition is skewed to low complexity over residues 32–87 and 98–130; these read ECNE…NINE and SPYS…SPIP. Disordered regions lie at residues 32 to 149, 161 to 494, 537 to 580, and 609 to 942; these read ECNE…PQNI, LESP…RLKK, RQEK…QGGA, and FKNN…CQQN. A compositionally biased stretch (polar residues) spans 131-149; sequence NTNFKQSGEYQSIPSPQNI. The span at 163–261 shows a compositional bias: low complexity; sequence SPNSSNSSPS…PSSNLSKSNS (99 aa). A compositionally biased stretch (polar residues) spans 269–290; that stretch reads QAPSNTSSPQLLSPNHNQQRIS. Composition is skewed to low complexity over residues 299-430 and 450-464; these read NNNH…NSSP and NNNN…SNSS. A compositionally biased stretch (polar residues) spans 465-481; sequence FDEYQPQQKVSRSNSPN. Positions 485-544 form a DNA-binding region, homeobox; sequence EKKRRTRLKKEQADILKTFFDNDDYPTKDDKETLANRLGMSYCAVTTWFSNKRQEKKRRG. 6 stretches are compositionally biased toward low complexity: residues 609–621, 628–685, 694–737, 752–764, 776–864, and 890–927; these read FKNN…NKNV, NNNN…GSSD, NNNN…NNNN, SDDT…YLNN, and NNFN…NDNN. Residues 835–865 adopt a coiled-coil conformation; that stretch reads NNNNNNNNQNNNNNNNNNQYNNNNKNYLNNI.

It is found in the nucleus. In terms of biological role, putative transcription factor that may potentiate the function of warA. The polypeptide is Homeobox protein 2 (hbx2) (Dictyostelium discoideum (Social amoeba)).